Reading from the N-terminus, the 442-residue chain is CBL-interacting serine/threonine-protein kinase 14 (442 aa).

The Protein kinase domain maps to 22 to 276 (YEVGKLVGCG…IEEIIHDPWF (255 aa)). ATP is bound by residues 28–36 (VGCGAFAKV) and K51. D144 functions as the Proton acceptor in the catalytic mechanism. Residues 162 to 191 (DFGLSALTDQIRPDGLLHTLCGTPAYVAPE) form an activation loop region. S166 is subject to Phosphoserine. T180 bears the Phosphothreonine mark. Residues 305-329 (MGARRMNAFDIISGSPGFNLSGLFG) enclose the NAF domain. The interval 335-365 (DRVERFVSAWTAERVVERLEEIVSAENLTVA) is PPI.

It belongs to the protein kinase superfamily. CAMK Ser/Thr protein kinase family. SNF1 subfamily. As to quaternary structure, interacts with CBL2. Interacts with CBL3. Interacts with CBL8. Interacts with CBL9. Interacts with KIN10 and KIN11. Requires Mn(2+) as cofactor. Predominant in roots, cauline leaves, and flowers. Ubiquitous with highest expression in 7-day-old seedlings and flower buds, followed by that in cauline leaves and young siliques.

The protein resides in the cytoplasm. It localises to the nucleus. The catalysed reaction is L-seryl-[protein] + ATP = O-phospho-L-seryl-[protein] + ADP + H(+). It carries out the reaction L-threonyl-[protein] + ATP = O-phospho-L-threonyl-[protein] + ADP + H(+). CIPK serine-threonine protein kinases interact with CBL proteins. Binding of a CBL protein to the regulatory NAF domain of CIPK protein lead to the activation of the kinase in a calcium-dependent manner. This chain is CBL-interacting serine/threonine-protein kinase 14 (CIPK14), found in Arabidopsis thaliana (Mouse-ear cress).